Consider the following 1843-residue polypeptide: Cilia- and flagella-associated protein 44 (1843 aa).

The tract at residues 1-86 is disordered; the sequence is MKEPDDQDTS…PPVEVKEEPE (86 aa). A compositionally biased stretch (polar residues) spans 29–39; that stretch reads LKSSQDTTADS. Residues 41–58 show a composition bias toward acidic residues; sequence TDGEESYLGDDLDLDDMD. WD repeat units follow at residues 214–255, 258–297, 308–346, 353–390, 456–495, 497–541, and 561–600; these read GAEK…PILR, AFSQ…TGLK, TSTS…VELC, CHSG…TADV, FHSG…PLVH, KFKQ…GLTV, and PHTD…KPIG. The interval 701–726 is disordered; sequence REAFGEEEIPEEETSEEGEEEEPPLP. Acidic residues predominate over residues 705 to 724; the sequence is GEEEIPEEETSEEGEEEEPP. WD repeat units follow at residues 790–829 and 842–881; these read TEDN…PFLV and NNYG…IVPK. 3 disordered regions span residues 1040 to 1086, 1266 to 1291, and 1488 to 1524; these read YSKL…SVLE, QRKQ…SAGG, and KEVE…DDVF. Over residues 1047–1071 the composition is skewed to basic and acidic residues; sequence SQSERRQSKMERLEKEGPGKKESQR. The residue at position 1069 (S1069) is a Phosphoserine. Polar residues predominate over residues 1072-1081; that stretch reads DTGGSISLQE. The span at 1492 to 1524 shows a compositional bias: acidic residues; that stretch reads GDADEDEESEESSEEESSLESDEDASGSEDDVF. Coiled coils occupy residues 1548 to 1603 and 1631 to 1665; these read RLDI…RLNE and LVFS…CRER. Residues 1699–1744 form a WD 10 repeat; the sequence is IDLEALQTLSVNTTLEELKIKKLRKELSNAKELRMWEEKIAQVRWD.

Belongs to the CFAP44 family. In terms of tissue distribution, expressed in testis.

It localises to the cell projection. The protein localises to the cilium. The protein resides in the flagellum. Its subcellular location is the cytoplasm. It is found in the cytoskeleton. It localises to the flagellum axoneme. Its function is as follows. Flagellar protein involved in sperm flagellum axoneme organization and function. This Mus musculus (Mouse) protein is Cilia- and flagella-associated protein 44.